The chain runs to 449 residues: UDP-N-acetylmuramate--L-alanine ligase (449 aa).

ATP is bound at residue 121–127 (GAHGKSS).

It belongs to the MurCDEF family.

It localises to the cytoplasm. It carries out the reaction UDP-N-acetyl-alpha-D-muramate + L-alanine + ATP = UDP-N-acetyl-alpha-D-muramoyl-L-alanine + ADP + phosphate + H(+). The protein operates within cell wall biogenesis; peptidoglycan biosynthesis. Its function is as follows. Cell wall formation. The protein is UDP-N-acetylmuramate--L-alanine ligase of Helicobacter pylori (strain HPAG1).